The chain runs to 628 residues: DNA ligase (628 aa).

Residues 36–40, 85–86, and glutamate 117 each bind NAD(+); these read DVEYD and SL. The N6-AMP-lysine intermediate role is filled by lysine 119. Residues arginine 140, glutamate 174, lysine 309, and lysine 333 each coordinate NAD(+). The Zn(2+) site is built by cysteine 427, cysteine 430, cysteine 446, and cysteine 452.

The protein belongs to the NAD-dependent DNA ligase family. LigA subfamily. It depends on Mg(2+) as a cofactor. Requires Mn(2+) as cofactor.

It catalyses the reaction NAD(+) + (deoxyribonucleotide)n-3'-hydroxyl + 5'-phospho-(deoxyribonucleotide)m = (deoxyribonucleotide)n+m + AMP + beta-nicotinamide D-nucleotide.. Functionally, DNA ligase that catalyzes the formation of phosphodiester linkages between 5'-phosphoryl and 3'-hydroxyl groups in double-stranded DNA using NAD as a coenzyme and as the energy source for the reaction. It is essential for DNA replication and repair of damaged DNA. In Tropheryma whipplei (strain Twist) (Whipple's bacillus), this protein is DNA ligase.